We begin with the raw amino-acid sequence, 121 residues long: Flagellar protein FliT (121 aa).

The required for homodimerization stretch occupies residues 1 to 50 (MNHAPHLYFAWQQLVEKSQLMLRLATEEQWDELIASEMAYVNAVQEIAHL). A fliD binding region spans residues 60-98 (MQEQLRPMLRLILDNESKVKQLLQIRMDELAKLVGQSSV).

Belongs to the FliT family. Homodimer. Interacts with FliD and FlhC.

Its subcellular location is the cytoplasm. It localises to the cytosol. Dual-function protein that regulates the transcription of class 2 flagellar operons and that also acts as an export chaperone for the filament-capping protein FliD. As a transcriptional regulator, acts as an anti-FlhDC factor; it directly binds FlhC, thus inhibiting the binding of the FlhC/FlhD complex to class 2 promoters, resulting in decreased expression of class 2 flagellar operons. As a chaperone, effects FliD transition to the membrane by preventing its premature polymerization, and by directing it to the export apparatus. The polypeptide is Flagellar protein FliT (Escherichia coli O8 (strain IAI1)).